We begin with the raw amino-acid sequence, 263 residues long: Inactive adenylate kinase (263 aa).

The protein belongs to the adenylate kinase family.

The protein localises to the cytoplasm. In terms of biological role, lacks adenylate kinase activity. This is Inactive adenylate kinase from Plasmodium falciparum (isolate 3D7).